Here is a 102-residue protein sequence, read N- to C-terminus: Urease subunit beta (102 aa).

Belongs to the urease beta subunit family. As to quaternary structure, heterotrimer of UreA (gamma), UreB (beta) and UreC (alpha) subunits. Three heterotrimers associate to form the active enzyme.

Its subcellular location is the cytoplasm. It carries out the reaction urea + 2 H2O + H(+) = hydrogencarbonate + 2 NH4(+). It functions in the pathway nitrogen metabolism; urea degradation; CO(2) and NH(3) from urea (urease route): step 1/1. This chain is Urease subunit beta, found in Acinetobacter baylyi (strain ATCC 33305 / BD413 / ADP1).